A 205-amino-acid polypeptide reads, in one-letter code: uncharacterized protein (205 aa).

At 1–63 the chain is on the cytoplasmic side; sequence MQRTRELESS…QHPKVAKFLK (63 aa). A helical transmembrane segment spans residues 64-84; that stretch reads VQLVFDLISLFIFATHQLLLL. Over 85-124 the chain is Extracellular; that stretch reads EDGNFGKHYFKRKTKRCSKFSCSRCNANAHHPKWFKFKHS. Residues 125 to 145 form a helical membrane-spanning segment; it reads LLCLGTFCFGVYSLVKINKFF. Over 146 to 205 the chain is Cytoplasmic; that stretch reads KTDQTVDLNRLLELFFWQLNAILNMKLFAFYGDHLESHSAPLDVYEDSFANKSSSGGDEV.

It is found in the membrane. This is an uncharacterized protein from Saccharomyces cerevisiae (strain ATCC 204508 / S288c) (Baker's yeast).